A 394-amino-acid polypeptide reads, in one-letter code: Ribulose bisphosphate carboxylase large chain (394 aa).

Lys-5 bears the N6,N6,N6-trimethyllysine mark. Positions 114 and 164 each coordinate substrate. Lys-166 acts as the Proton acceptor in catalysis. Lys-168 lines the substrate pocket. Mg(2+)-binding residues include Lys-192, Asp-194, and Glu-195. Residue Lys-192 is modified to N6-carboxylysine. The active-site Proton acceptor is the His-285. 3 residues coordinate substrate: Arg-286, His-318, and Ser-370.

It belongs to the RuBisCO large chain family. Type I subfamily. In terms of assembly, heterohexadecamer of 8 large chains and 8 small chains. Mg(2+) serves as cofactor.

It localises to the plastid. The protein resides in the chloroplast. It catalyses the reaction 2 (2R)-3-phosphoglycerate + 2 H(+) = D-ribulose 1,5-bisphosphate + CO2 + H2O. It carries out the reaction D-ribulose 1,5-bisphosphate + O2 = 2-phosphoglycolate + (2R)-3-phosphoglycerate + 2 H(+). Functionally, ruBisCO catalyzes two reactions: the carboxylation of D-ribulose 1,5-bisphosphate, the primary event in carbon dioxide fixation, as well as the oxidative fragmentation of the pentose substrate in the photorespiration process. Both reactions occur simultaneously and in competition at the same active site. The polypeptide is Ribulose bisphosphate carboxylase large chain (rbcL) (Euryale ferox (Gorgon plant)).